The following is a 231-amino-acid chain: uncharacterized protein (231 aa).

The signal sequence occupies residues 1–25 (MAKWVPALLLRRVPLFSLRFRPASS). At 26–200 (TFLPVLAATE…SRPSPSATLT (175 aa)) the chain is on the extracellular side. The disordered stretch occupies residues 39-64 (SVPSGDLSMPVKTRAEGEDDGFGEAG). A helical membrane pass occupies residues 201–225 (LLLASSCLLAPAPPSFILLLFTLIA). Over 226–231 (PDLPHS) the chain is Cytoplasmic.

It is found in the membrane. This is an uncharacterized protein from Homo sapiens (Human).